The primary structure comprises 446 residues: Phosphoglucosamine mutase (446 aa).

Catalysis depends on Ser100, which acts as the Phosphoserine intermediate. The Mg(2+) site is built by Ser100, Asp241, Asp243, and Asp245. Ser100 bears the Phosphoserine mark.

The protein belongs to the phosphohexose mutase family. Requires Mg(2+) as cofactor. Post-translationally, activated by phosphorylation.

It catalyses the reaction alpha-D-glucosamine 1-phosphate = D-glucosamine 6-phosphate. Catalyzes the conversion of glucosamine-6-phosphate to glucosamine-1-phosphate. This Methylorubrum extorquens (strain CM4 / NCIMB 13688) (Methylobacterium extorquens) protein is Phosphoglucosamine mutase.